A 108-amino-acid chain; its full sequence is Thiosulfate sulfurtransferase GlpE (108 aa).

Residues 17-105 form the Rhodanese domain; it reads QEKEAVLVDI…WQRQFPAEVA (89 aa). The active-site Cysteine persulfide intermediate is the Cys-65.

The protein belongs to the GlpE family.

Its subcellular location is the cytoplasm. It catalyses the reaction thiosulfate + hydrogen cyanide = thiocyanate + sulfite + 2 H(+). The catalysed reaction is thiosulfate + [thioredoxin]-dithiol = [thioredoxin]-disulfide + hydrogen sulfide + sulfite + 2 H(+). Its function is as follows. Transferase that catalyzes the transfer of sulfur from thiosulfate to thiophilic acceptors such as cyanide or dithiols. May function in a CysM-independent thiosulfate assimilation pathway by catalyzing the conversion of thiosulfate to sulfite, which can then be used for L-cysteine biosynthesis. The protein is Thiosulfate sulfurtransferase GlpE of Escherichia coli O139:H28 (strain E24377A / ETEC).